Consider the following 616-residue polypeptide: UvrABC system protein C (616 aa).

Residues 12–97 enclose the GIY-YIG domain; it reads NDAGVYQYFD…IKQLKPKYNI (86 aa). The UVR domain occupies 203 to 238; sequence TKLISKLNEKMLQYSNDFRFEEAMTLRDRIKTIEKS.

The protein belongs to the UvrC family. Interacts with UvrB in an incision complex.

Its subcellular location is the cytoplasm. The UvrABC repair system catalyzes the recognition and processing of DNA lesions. UvrC both incises the 5' and 3' sides of the lesion. The N-terminal half is responsible for the 3' incision and the C-terminal half is responsible for the 5' incision. The polypeptide is UvrABC system protein C (Aliarcobacter butzleri (strain RM4018) (Arcobacter butzleri)).